A 171-amino-acid chain; its full sequence is Putative phosphoesterase BH1439 (171 aa).

Histidine 34 (proton donor) is an active-site residue. 2 short sequence motifs (HXTX) span residues 34–37 and 115–118; these read HVTL and HLTI. Histidine 115 acts as the Proton acceptor in catalysis.

This sequence belongs to the 2H phosphoesterase superfamily. YjcG family.

This chain is Putative phosphoesterase BH1439, found in Halalkalibacterium halodurans (strain ATCC BAA-125 / DSM 18197 / FERM 7344 / JCM 9153 / C-125) (Bacillus halodurans).